The sequence spans 99 residues: Large ribosomal subunit protein uL23 (99 aa).

Belongs to the universal ribosomal protein uL23 family. In terms of assembly, part of the 50S ribosomal subunit. Contacts protein L29, and trigger factor when it is bound to the ribosome.

One of the early assembly proteins it binds 23S rRNA. One of the proteins that surrounds the polypeptide exit tunnel on the outside of the ribosome. Forms the main docking site for trigger factor binding to the ribosome. The protein is Large ribosomal subunit protein uL23 of Haemophilus influenzae (strain 86-028NP).